A 337-amino-acid polypeptide reads, in one-letter code: MSIISIAVDAMGGDFAPEAVVSGLDFALTNLLDDQNVSFNIYGQGSQVLPILDKYKDLKEHSVFIDTPEVVLANDKPSFALRKRRSSSMWCAIDSIKSGVTSGVVSSGNTGALMAISRFLLGTLPNIDRPAICTALPSRGEEYFVLLDLGANIESSSNALFQFAIMGSAFAKAVLNIASPKVALLNVGQEEVKGTDVIREAFLLLKQAEGRINFCGYIEPIDILGDKVDVVVTDGFCGNIVLKVAESIAYTFKSVFEKSVTSSIISKFAGLLLKSQMKKDFMRFNPKMYNGAMLLGLNGVVVKSHGNADKVAFAHAIKVTVNAVRNDINAKIIHELS.

It belongs to the PlsX family. As to quaternary structure, homodimer. Probably interacts with PlsY.

It is found in the cytoplasm. The catalysed reaction is a fatty acyl-[ACP] + phosphate = an acyl phosphate + holo-[ACP]. It functions in the pathway lipid metabolism; phospholipid metabolism. Its function is as follows. Catalyzes the reversible formation of acyl-phosphate (acyl-PO(4)) from acyl-[acyl-carrier-protein] (acyl-ACP). This enzyme utilizes acyl-ACP as fatty acyl donor, but not acyl-CoA. The sequence is that of Phosphate acyltransferase from Ehrlichia chaffeensis (strain ATCC CRL-10679 / Arkansas).